The sequence spans 319 residues: MAKEIVKELLPLIRVYKDGSVERLLSSENVAASPEDPQTGVSSKDIVIADNPYVSARIFLPKSHHTNNKLPIFLYFHGGAFCVESAFSFFVHRYLNILASEANIIAISVDFRLLPHHPIPAAYEDGWTTLKWIASHANNTNTTNPEPWLLNHADFTKVYVGGETSGANIAHNLLLRAGNESLPGDLKILGGLLCCPFFWGSKPIGSEAVEGHEQSLAMKVWNFACPDAPGGIDNPWINPCVPGAPSLATLACSKLLVTITGKDEFRDRDILYHHTVEQSGWQGELQLFDAGDEEHAFQLFKPETHLAKAMIKRLASFLV.

Residues 77 to 79 carry the Involved in the stabilization of the negatively charged intermediate by the formation of the oxyanion hole motif; that stretch reads HGG. T164 acts as the Proton acceptor in catalysis. D263 is a catalytic residue. The active-site Proton donor/acceptor is H295.

Belongs to the 'GDXG' lipolytic enzyme family.

The catalysed reaction is (2R,3S)-2,4',7-trihydroxyisoflavanone = daidzein + H2O + H(+). It carries out the reaction 2-hydroxy-2,3-dihydrogenistein = genistein + H2O + H(+). It catalyses the reaction a carboxylic ester + H2O = an alcohol + a carboxylate + H(+). The protein operates within secondary metabolite biosynthesis; flavonoid biosynthesis. Dehydratase that mediates the biosynthesis of isoflavonoids. Can use both 4'-hydroxylated and 4'-methoxylated 2-hydroxyisoflavanones as substrates. Also has a slight carboxylesterase activity toward p-nitrophenyl butyrate. This chain is 2-hydroxyisoflavanone dehydratase (HIDH), found in Glycine max (Soybean).